A 497-amino-acid polypeptide reads, in one-letter code: Indoleacetaldoxime dehydratase (497 aa).

The chain crosses the membrane as a helical span at residues 2-20 (EMILSISLCLTTLITLLLL). C439 contributes to the heme binding site.

Belongs to the cytochrome P450 family.

It is found in the membrane. It carries out the reaction (E)-(indol-3-yl)acetaldehyde oxime = (indol-3-yl)acetonitrile + H2O. Involved in the biosynthesis of the indole-derived phytoalexin camalexin. Catalyzes the conversion of indole-3-acetaldoxime to indole-3-acetonitrile. Required for resistance to A.brassicicola and B.cinerea. This Arabidopsis thaliana (Mouse-ear cress) protein is Indoleacetaldoxime dehydratase (CYP71A13).